Reading from the N-terminus, the 98-residue chain is High mobility group nucleosome-binding domain-containing protein 3 (98 aa).

4 stretches are compositionally biased toward basic and acidic residues: residues 1–25, 39–52, 61–71, and 80–98; these read MPKR…EPTR, PEPK…KEPG, GKKDEKQEAAK, and GENK…DKNE. The tract at residues 1 to 98 is disordered; it reads MPKRKSPEGA…KTESVGDKNE (98 aa).

Belongs to the HMGN family.

The protein resides in the nucleus. This Gallus gallus (Chicken) protein is High mobility group nucleosome-binding domain-containing protein 3 (HMGN3).